A 278-amino-acid polypeptide reads, in one-letter code: Orotidine 5'-phosphate decarboxylase (278 aa).

Substrate contacts are provided by residues D40, 62-64 (KTH), 93-102 (DRKFIDIGNT), Y229, and R247. Residue K95 is the Proton donor of the active site.

Belongs to the OMP decarboxylase family.

The enzyme catalyses orotidine 5'-phosphate + H(+) = UMP + CO2. Its pathway is pyrimidine metabolism; UMP biosynthesis via de novo pathway; UMP from orotate: step 2/2. This is Orotidine 5'-phosphate decarboxylase (pyrG) from Aspergillus fumigatus (strain ATCC MYA-4609 / CBS 101355 / FGSC A1100 / Af293) (Neosartorya fumigata).